We begin with the raw amino-acid sequence, 1982 residues long: Ras guanine nucleotide exchange factor V (1982 aa).

15 LRR repeats span residues 1–26 (MGNI…SLEG), 47–68 (LTQL…ITNL), 69–94 (SNLS…PFKP), 105–128 (NENL…VFVL), 130–151 (NLKQ…LCGG), 164–187 (ACQL…IGDQ), 188–210 (LTTL…SFSN), 212–234 (VSLT…LCTL), 236–257 (KLVH…HTLG), 261–284 (LPSL…ILEI), 286–307 (SLRV…IGNL), 308–330 (LNLN…IGEL), 331–352 (INLR…EFSK), 354–376 (SKLN…LHSL), and 378–399 (QLLR…LIKS). At 1–1831 (MGNINSICLN…IANAFYELRN (1831 aa)) the chain is on the extracellular side. Disordered regions lie at residues 414 to 436 (YGST…STHG), 457 to 532 (NQIN…NKKQ), and 615 to 654 (NNSG…RRGS). Composition is skewed to low complexity over residues 415–436 (GSTM…STHG) and 457–495 (NQIN…TPNG). An LRR 16 repeat occupies 443-466 (DILLSSVTLNNSILNQINNNNNNN). A compositionally biased stretch (polar residues) spans 506 to 520 (LTISRSLFRGNSSNL). The stretch at 515 to 567 (GNSSNLESEKEDFINKKQQQQQQQQQQQQQQQQQQQQQQQQQQQQQQQQQQLG) forms a coiled coil. The stretch at 592–615 (EDDIQKMQLGLEALSNLETSIGSN) is one LRR 17 repeat. Residues 616 to 642 (NSGGGDSMNGSGGNINNSGGSGSGCGT) show a composition bias toward gly residues. LRR repeat units follow at residues 657-684 (LPPT…VMSG) and 773-796 (HSNL…LSSS). 2 disordered regions span residues 756–778 (QSST…NLSQ) and 807–829 (LQFQ…SNQP). One can recognise a GBD/FH3 domain in the interval 832 to 1236 (TIVPSFSKFK…QIKYSIDRYG (405 aa)). LRR repeat units follow at residues 979–1003 (LLGI…GYCL), 1075–1100 (SPYV…VFKI), 1239–1263 (VPAI…RWVD), and 1689–1712 (VQNM…FVDL). The 123-residue stretch at 1595–1717 (KDRRVSSVTL…LFVDLSTKSY (123 aa)) folds into the N-terminal Ras-GEF domain. In terms of domain architecture, Ras-GEF spans 1747-1974 (DEIEIARQLS…YEMSLSAEPR (228 aa)). Residues 1832 to 1848 (YHLLMAIISGLNASPVL) traverse the membrane as a helical segment. Residues 1849-1982 (RLKYTKGKLS…PRNAERYDIQ (134 aa)) are Cytoplasmic-facing. 2 LRR repeats span residues 1865-1888 (LDTL…LAAA) and 1917-1941 (RINF…LFPY).

The protein resides in the membrane. Its function is as follows. Promotes the exchange of Ras-bound GDP by GTP. The polypeptide is Ras guanine nucleotide exchange factor V (gefV) (Dictyostelium discoideum (Social amoeba)).